The sequence spans 490 residues: MANYFNTLPLREQLAQLAQCEFMNADEFTDGVDALKGKKLVIVGCGAQGLNQGLNLRDSGLDVSYTLRDSAISERRQSFLNASENGFTVGTYQELIPTADVVLNLTPDKQHTSVVNAIMPLMKQGSTLAYSHGFNIVEEGMQVRDDITVIMVAPKCPGSEVREEYKRGFGVPTLIAVHPENDPQGHGLAQAKAYAAGTGGHRAGVLKSSFIAEVKSDLMGEQTILCGMLQTGSILCFDKMIEKGIDAGYASKLIQYGWEVITEALKYGGVTNMLDRLSNPAKVKAFELSEELKQIMRPLYNKHQDDIIDGTFSRTMMEDWNNDDANLLKWRAETAETHFEKTPAGNVEIAEQEFFDNGILMVAMVKAGVELAFETMTAAGIIAESAYYESLHETPLIANTIARKKLFEMNRTISDTAEYGCYLYNHACLPLLQDFMQKIDTDVIGKGLGEHSNQVDNQTLIQINTALREHPVEKVGATLRGYMSAMKKIV.

One can recognise a KARI N-terminal Rossmann domain in the interval 17–208 (LAQCEFMNAD…GGHRAGVLKS (192 aa)). NADP(+) contacts are provided by residues 45–48 (CGAQ), R68, R76, S78, and 108–110 (DKQ). H132 is a catalytic residue. G158 serves as a coordination point for NADP(+). 2 KARI C-terminal knotted domains span residues 209-353 (SFIA…AEQE) and 355-486 (FDNG…MSAM). Residues D217, E221, E389, and E393 each contribute to the Mg(2+) site. S414 serves as a coordination point for substrate.

The protein belongs to the ketol-acid reductoisomerase family. It depends on Mg(2+) as a cofactor.

It carries out the reaction (2R)-2,3-dihydroxy-3-methylbutanoate + NADP(+) = (2S)-2-acetolactate + NADPH + H(+). The enzyme catalyses (2R,3R)-2,3-dihydroxy-3-methylpentanoate + NADP(+) = (S)-2-ethyl-2-hydroxy-3-oxobutanoate + NADPH + H(+). It functions in the pathway amino-acid biosynthesis; L-isoleucine biosynthesis; L-isoleucine from 2-oxobutanoate: step 2/4. Its pathway is amino-acid biosynthesis; L-valine biosynthesis; L-valine from pyruvate: step 2/4. Its function is as follows. Involved in the biosynthesis of branched-chain amino acids (BCAA). Catalyzes an alkyl-migration followed by a ketol-acid reduction of (S)-2-acetolactate (S2AL) to yield (R)-2,3-dihydroxy-isovalerate. In the isomerase reaction, S2AL is rearranged via a Mg-dependent methyl migration to produce 3-hydroxy-3-methyl-2-ketobutyrate (HMKB). In the reductase reaction, this 2-ketoacid undergoes a metal-dependent reduction by NADPH to yield (R)-2,3-dihydroxy-isovalerate. The sequence is that of Ketol-acid reductoisomerase (NADP(+)) from Pseudoalteromonas translucida (strain TAC 125).